A 28-amino-acid chain; its full sequence is Ranatuerin-2LT (28 aa).

Cys-23 and Cys-28 are oxidised to a cystine.

As to expression, expressed by the skin glands.

The protein resides in the secreted. Functionally, has antibacterial activity. The protein is Ranatuerin-2LT of Rana latastei (Italian agile frog).